The sequence spans 134 residues: FK506-binding protein 2 (134 aa).

The signal sequence occupies residues 1-19; sequence MRILLLSALFLSLTTLVLS. Residues 39–127 form the PPIase FKBP-type domain; the sequence is GDTVHMHYRG…IFETELVQIE (89 aa). Residues 131 to 134 carry the Prevents secretion from ER motif; sequence NDEL.

Belongs to the FKBP-type PPIase family. FKBP2 subfamily.

It is found in the endoplasmic reticulum. It catalyses the reaction [protein]-peptidylproline (omega=180) = [protein]-peptidylproline (omega=0). Its activity is regulated as follows. Inhibited by both FK506 and rapamycin. Its function is as follows. PPIases accelerate the folding of proteins. It catalyzes the cis-trans isomerization of proline imidic peptide bonds in oligopeptides. The polypeptide is FK506-binding protein 2 (fpr2) (Aspergillus fumigatus (strain ATCC MYA-4609 / CBS 101355 / FGSC A1100 / Af293) (Neosartorya fumigata)).